Reading from the N-terminus, the 69-residue chain is NAD(P)H-quinone oxidoreductase subunit O (69 aa).

Belongs to the complex I NdhO subunit family. NDH-1 can be composed of about 15 different subunits; different subcomplexes with different compositions have been identified which probably have different functions.

It is found in the cellular thylakoid membrane. The enzyme catalyses a plastoquinone + NADH + (n+1) H(+)(in) = a plastoquinol + NAD(+) + n H(+)(out). It catalyses the reaction a plastoquinone + NADPH + (n+1) H(+)(in) = a plastoquinol + NADP(+) + n H(+)(out). Its function is as follows. NDH-1 shuttles electrons from an unknown electron donor, via FMN and iron-sulfur (Fe-S) centers, to quinones in the respiratory and/or the photosynthetic chain. The immediate electron acceptor for the enzyme in this species is believed to be plastoquinone. Couples the redox reaction to proton translocation, and thus conserves the redox energy in a proton gradient. Cyanobacterial NDH-1 also plays a role in inorganic carbon-concentration. The polypeptide is NAD(P)H-quinone oxidoreductase subunit O (Acaryochloris marina (strain MBIC 11017)).